We begin with the raw amino-acid sequence, 1163 residues long: MTRTRAALLLFTALATSLGFNLDTEELTAFRVDSAGFGDSVVQYANSWVVVGAPQKITAANQTGGLYQCGYSTGACEPIGLQVPPEAVNMSLGLSLASTTSPSQLLACGPTVHHECGRNMYLTGLCFLLGPTQLTQRLPVSRQECPRQEQDIVFLIDGSGSISSRNFATMMNFVRAVISQFQRPSTQFSLMQFSNKFQTHFTFEEFRRSSNPLSLLASVHQLQGFTYTATAIQNVVHRLFHASYGARRDAAKILIVITDGKKEGDSLDYKDVIPMADAAGIIRYAIGVGLAFQNRNSWKELNDIASKPSQEHIFKVEDFDALKDIQNQLKEKIFAIEGTETTSSSSFELEMAQEGFSAVFTPDGPVLGAVGSFTWSGGAFLYPPNMSPTFINMSQENVDMRDSYLGYSTELALWKGVQSLVLGAPRYQHTGKAVIFTQVSRQWRMKAEVTGTQIGSYFGASLCSVDVDSDGSTDLVLIGAPHYYEQTRGGQVSVCPLPRGWRRWWCDAVLYGEQGHPWGRFGAALTVLGDVNGDKLTDVVIGAPGEEENRGAVYLFHGVLGPSISPSHSQRIAGSQLSSRLQYFGQALSGGQDLTQDGLVDLAVGARGQVLLLRTRPVLWVGVSMQFIPAEIPRSAFECREQVVSEQTLVQSNICLYIDKRSKNLLGSRDLQSSVTLDLALDPGRLSPRATFQETKNRSLSRVRVLGLKAHCENFNLLLPSCVEDSVTPITLRLNFTLVGKPLLAFRNLRPMLAADAQRYFTASLPFEKNCGADHICQDNLGISFSFPGLKSLLVGSNLELNAEVMVWNDGEDSYGTTITFSHPAGLSYRYVAEGQKQGQLRSLHLTCDSAPVGSQGTWSTSCRINHLIFRGGAQITFLATFDVSPKAVLGDRLLLTANVSSENNTPRTSKTTFQLELPVKYAVYTVVSSHEQFTKYLNFSESEEKESHVAMHRYQVNNLGQRDLPVSINFWVPVELNQEAVWMDVEVSHPQNPSLRCSSEKIAPPASDFLAHIQKNPVLDCSIAGCLRFRCDVPSFSVQEELDFTLKGNLSFGWVRQILQKKVSVVSVAEITFDTSVYSQLPGQEAFMRAQTTTVLEKYKVHNPTPLIVGSSIGGLLLLALITAVLYKVGFFKRQYKEMMEEANGQIAPENGTQTPSPPSEK.

The signal sequence occupies residues 1-19; that stretch reads MTRTRAALLLFTALATSLG. Over 20–1107 the chain is Extracellular; the sequence is FNLDTEELTA…EKYKVHNPTP (1088 aa). 2 FG-GAP repeats span residues 23–78 and 79–138; these read DTEE…ACEP and IGLQ…TQRL. The N-linked (GlcNAc...) asparagine glycan is linked to N61. C69 and C76 are joined by a disulfide. N-linked (GlcNAc...) asparagine glycosylation occurs at N89. Disulfide bonds link C108–C126 and C116–C145. Positions 157, 159, 161, and 259 each coordinate Mg(2+). The region spanning 165 to 339 is the VWFA domain; sequence RNFATMMNFV…KEKIFAIEGT (175 aa). FG-GAP repeat units lie at residues 340 to 391, 392 to 443, 444 to 504, 507 to 565, and 570 to 630; these read ETTS…PTFI, NMSQ…SRQW, RMKA…WRRW, DAVL…PSIS, and QRIA…FIPA. A glycan (N-linked (GlcNAc...) asparagine) is linked at N392. Ca(2+) contacts are provided by D466, D468, D470, and D474. A disulfide bridge connects residues C495 and C506. D530, N532, D534, D538, D593, D597, and D601 together coordinate Ca(2+). 2 disulfide bridges follow: C639-C722 and C655-C712. N-linked (GlcNAc...) asparagine glycosylation is found at N697 and N735. Disulfide bonds link C771–C777 and C848–C863. N899 and N939 each carry an N-linked (GlcNAc...) asparagine glycan. 2 disulfide bridges follow: C998-C1022 and C1027-C1032. N1050 carries an N-linked (GlcNAc...) asparagine glycan. A helical transmembrane segment spans residues 1108-1128; it reads LIVGSSIGGLLLLALITAVLY. The Cytoplasmic segment spans residues 1129-1163; that stretch reads KVGFFKRQYKEMMEEANGQIAPENGTQTPSPPSEK. The short motif at 1131–1135 is the GFFKR motif element; it reads GFFKR.

It belongs to the integrin alpha chain family. In terms of assembly, heterodimer of an alpha and a beta subunit. Alpha-X associates with beta-2. As to expression, predominantly expressed in monocytes and granulocytes.

The protein localises to the membrane. Functionally, integrin alpha-X/beta-2 is a receptor for fibrinogen. It recognizes the sequence G-P-R in fibrinogen. It mediates cell-cell interaction during inflammatory responses. It is especially important in monocyte adhesion and chemotaxis. The polypeptide is Integrin alpha-X (ITGAX) (Homo sapiens (Human)).